Here is a 397-residue protein sequence, read N- to C-terminus: LIM/homeobox protein Lhx3 (397 aa).

LIM zinc-binding domains lie at 31–81 (CAGC…CKDD) and 90–144 (CAAC…CKAD). Thr63 carries the phosphothreonine modification. Residue Ser71 is modified to Phosphoserine. Positions 157–216 (AKRPRTTITAKQLETLKSAYNTSPKPARHVREQLSSETGLDMRVVQVWFQNRRAKEKRLK) form a DNA-binding region, homeobox. The disordered stretch occupies residues 212–397 (EKRLKKDAGR…WLDEVDHAQF (186 aa)). The residue at position 227 (Tyr227) is a Phosphotyrosine. Phosphoserine is present on residues Ser234 and Ser238. The span at 316-331 (GVPPSPAAPQSLPGPQ) shows a compositional bias: pro residues.

Interacts with POU1F1. At neuronal promoters, interacts with LDB1, in motor neurons LDB1 is displaced by ISL1 and a ternary complex is formed in which ISL1 contacts both LHX3 and LDB1; allosteric structural changes in the DNA binding domain of LHX3, induced by the ISL1-LHX3 interaction, may explain differences in sequence specificity of the different complexes. Interacts with LDB2. May interact with CITED2/MRG1.

The protein resides in the nucleus. In terms of biological role, transcription factor. Recognizes and binds to the consensus sequence motif 5'-AATTAATTA-3' in the regulatory elements of target genes, such as glycoprotein hormones alpha chain CGA and visual system homeobox CHX10, positively modulating transcription; transcription can be co-activated by LDB2. Synergistically enhances transcription from the prolactin promoter in cooperation with POU1F1/Pit-1. Required for the establishment of the specialized cells of the pituitary gland and the nervous system. Involved in the development of interneurons and motor neurons in cooperation with LDB1 and ISL1. This chain is LIM/homeobox protein Lhx3 (LHX3), found in Homo sapiens (Human).